The primary structure comprises 1172 residues: Short transient receptor potential channel 2 (1172 aa).

Residues 1–10 (MLMSRTDSKS) are compositionally biased toward basic and acidic residues. Disordered regions lie at residues 1–22 (MLMSRTDSKSGKNRSGVRMFKD), 69–98 (VVDPSAPGSSGLNQNSTDVLESDPRPWLTN), 140–227 (SAAR…GGVQ), and 249–271 (ATCGESPPPQPASPASLSSSESV). The Cytoplasmic portion of the chain corresponds to 1–659 (MLMSRTDSKS…PKSQLGRLLK (659 aa)). A compositionally biased stretch (polar residues) spans 75–87 (PGSSGLNQNSTDV). Basic and acidic residues predominate over residues 166–177 (ESAEPRAEEPNR). Over residues 195 to 204 (SLSNSSSQPN) the composition is skewed to polar residues. Basic residues predominate over residues 206–218 (RTGRTRQRQHRPQ). Low complexity predominate over residues 261–270 (SPASLSSSES). ANK repeat units follow at residues 301–330 (KFPPTLLRAIQEGQLGLVQQLLESSSDASG), 377–406 (QIHEALLVAVDTNQPAVVRRLLARLEREKG), and 430–459 (PGVTPLTLACQKDLYEIAQLLMDQGHTIAR). Residues 660–680 (IPVLKFLLHSASYLWFLIFLL) traverse the membrane as a helical segment. Residues 681 to 702 (GESLVMETQLSTFKGRSQSVWE) lie on the Extracellular side of the membrane. The helical transmembrane segment at 703–723 (TSLHMIWVTGFLWFECKEVWI) threads the bilayer. Over 724–738 (EGLRSYLLDWWNFLD) the chain is Cytoplasmic. Residues 739 to 759 (VVILSLYLASFALRLLLAGLA) form a helical membrane-spanning segment. Residues 760–789 (YMHCRDASDSTTCRYFTTAERSEWRTEDPQ) are Extracellular-facing. A helical membrane pass occupies residues 790 to 810 (FLAEVLFAVTSMLSFTRLAYI). The Cytoplasmic segment spans residues 811-833 (LPAHESLGTLQISIGKMIDDMIR). The chain crosses the membrane as a helical span at residues 834-854 (FMFILMIILTAFLCGLNNIYV). At 855 to 899 (PYQESEKLGNFNETFQFLFWTMFGMEEHTVVDMPQFLVPEFVGRA) the chain is on the extracellular side. The chain crosses the membrane as a helical span at residues 900–920 (MYGIFTIVMVIVLLNMLIAMI). Over 921 to 1172 (TNSFQKIEDD…EGDLETKGES (252 aa)) the chain is Cytoplasmic. Residues 1118 to 1172 (VSLGDGLDGTGEAGAPAPGEPGSSSSAHVLVHREQEAEGSGDLLLEGDLETKGES) are disordered. Low complexity predominate over residues 1130–1144 (AGAPAPGEPGSSSSA).

The protein belongs to the transient receptor (TC 1.A.4) family. STrpC subfamily. TRPC2 sub-subfamily. As to expression, isoform 3 is ubiquitously expressed at low levels. Isoform 4 is expressed exclusively in vomeronasal organ.

The protein localises to the membrane. Thought to form a receptor-activated non-selective calcium permeant cation channel. Probably is operated by a phosphatidylinositol second messenger system activated by receptor tyrosine kinases or G-protein coupled receptors. May also be activated by intracellular calcium store depletion. Plays a role in mediating responsivity to pheromones that elicit aggressive and mating behaviors. Required for response to the Esp1 pheromone which enhances female sexual receptive behavior and to the Esp22 pheromone which inhibits adult male mating behavior. The chain is Short transient receptor potential channel 2 (Trpc2) from Mus musculus (Mouse).